The following is a 439-amino-acid chain: uncharacterized protein (439 aa).

The YcaO domain occupies 116–439 (GKAASYRAAQ…PMRTPLQEAE (324 aa)).

This is an uncharacterized protein from Mycobacterium tuberculosis (strain CDC 1551 / Oshkosh).